A 464-amino-acid chain; its full sequence is Gamma-aminobutyric acid receptor subunit alpha-5 (464 aa).

An N-terminal signal peptide occupies residues 1–25 (MDNGMLSRFIMTKTLLVFCISMTLS). Residues 26-260 (SHFGFSQMPT…FHLKRKIGYF (235 aa)) lie on the Extracellular side of the membrane. Asn45 carries N-linked (GlcNAc...) asparagine glycosylation. Residue Arg101 participates in 4-aminobutanoate binding. The N-linked (GlcNAc...) asparagine glycan is linked to Asn145. Residue Thr164 participates in 4-aminobutanoate binding. A disulfide bridge links Cys173 with Cys187. Residues Asn207 and Asn236 are each glycosylated (N-linked (GlcNAc...) asparagine). Helical transmembrane passes span 261–281 (VIQT…SFWL), 287–308 (PART…ISAR), and 319–340 (AMDW…EFAT). Over 341–429 (VNYFTKRGWA…TYNSISKIDK (89 aa)) the chain is Cytoplasmic. Lys355 participates in a covalent cross-link: Glycyl lysine isopeptide (Lys-Gly) (interchain with G-Cter in ubiquitin). The tract at residues 382–414 (KLTHPPNIPKEQLPGGTGNAVGTASIRASEEKT) is disordered. A helical transmembrane segment spans residues 430 to 450 (MSRIVFPILFGTFNLVYWATY).

Belongs to the ligand-gated ion channel (TC 1.A.9) family. Gamma-aminobutyric acid receptor (TC 1.A.9.5) subfamily. GABRA5 sub-subfamily. In terms of assembly, heteropentamer, formed by a combination of alpha (GABRA1-6), beta (GABRB1-3), gamma (GABRG1-3), delta (GABRD), epsilon (GABRE), rho (GABRR1-3), pi (GABRP) and theta (GABRQ) chains, each subunit exhibiting distinct physiological and pharmacological properties. As to expression, expressed in brain areas such as cerebral cortex, hippocampal formation and olfactory bulb granular layer.

It localises to the postsynaptic cell membrane. The protein localises to the cell membrane. It carries out the reaction chloride(in) = chloride(out). Its activity is regulated as follows. Allosterically potentiated by alphaxalone. Allosterically inhibited by pregnenolone sulfate. Inhibited by zinc and lanthanum. In terms of biological role, alpha subunit of the heteropentameric ligand-gated chloride channel gated by gamma-aminobutyric acid (GABA), a major inhibitory neurotransmitter in the brain. GABA-gated chloride channels, also named GABA(A) receptors (GABAAR), consist of five subunits arranged around a central pore and contain GABA active binding site(s) located at the alpha and beta subunit interface(s). When activated by GABA, GABAARs selectively allow the flow of chloride anions across the cell membrane down their electrochemical gradient. GABAARs containing alpha-5/GABRA5 subunits are mainly extrasynaptic and contribute to the tonic GABAergic inhibition in the hippocampus. Extrasynaptic alpha-5-containing GABAARs in CA1 pyramidal neurons play a role in learning and memory processes. This chain is Gamma-aminobutyric acid receptor subunit alpha-5, found in Rattus norvegicus (Rat).